A 377-amino-acid polypeptide reads, in one-letter code: Benzylmalonyl-CoA dehydrogenase (377 aa).

Residues 123-132, 156-158, Arg-266, Gln-277, and 363-365 each bind FAD; these read ICMTEPNAGS, WIT, and TSE.

The protein belongs to the acyl-CoA dehydrogenase family. As to quaternary structure, homotetramer. It depends on FAD as a cofactor.

The enzyme catalyses (2-aminobenzyl)malonyl-CoA + O2 + H(+) = (E)-2-aminocinnamoyl-CoA + H2O2 + CO2. It carries out the reaction benzylmalonyl-CoA + O2 + H(+) = (E)-cinnamoyl-CoA + H2O2 + CO2. In terms of biological role, involved in degradation of indoleacetate, the most common member of the auxin class of plant hormones. Catalyzes the irreversible oxidative decarboxylation of (2-aminobenzyl)malonyl-CoA to 2-aminocinnamoyl-CoA and CO(2). In vitro, shows high catalytic efficiency with benzylmalonyl-CoA, a chemical analog of the physiological substrate, but otherwise accepts only a few medium-chain alkylmalonyl-CoA compounds as alternative substrates with low activities. The protein is Benzylmalonyl-CoA dehydrogenase of Aromatoleum aromaticum (strain DSM 19018 / LMG 30748 / EbN1) (Azoarcus sp. (strain EbN1)).